A 62-amino-acid chain; its full sequence is Large ribosomal subunit protein bL28 (62 aa).

This sequence belongs to the bacterial ribosomal protein bL28 family.

This is Large ribosomal subunit protein bL28 from Clostridioides difficile (strain 630) (Peptoclostridium difficile).